Reading from the N-terminus, the 285-residue chain is Protein pxr1 (285 aa).

The span at M1–K11 shows a compositional bias: basic residues. The disordered stretch occupies residues M1–R23. A G-patch domain is found at T25–K79. A disordered region spans residues T144–H263. Residues Q152 to L163 are compositionally biased toward basic and acidic residues. Residues K190–K208 show a composition bias toward basic residues. Basic and acidic residues predominate over residues R224–R234. Positions M254–H263 are enriched in basic residues.

Belongs to the PINX1 family.

It is found in the nucleus. The protein resides in the nucleolus. Involved in rRNA-processing at A0, A1 and A2 sites and negatively regulates telomerase. This Aspergillus niger (strain ATCC MYA-4892 / CBS 513.88 / FGSC A1513) protein is Protein pxr1 (pxr1).